The chain runs to 475 residues: FAD-dependent monooxygenase penE (475 aa).

FAD contacts are provided by Glu-35, Gly-49, and Arg-108. Tyr-216 is an active-site residue. 2 residues coordinate FAD: Asp-308 and Ala-321. An N-linked (GlcNAc...) asparagine glycan is attached at Asn-437. The helical transmembrane segment at 446 to 466 (WGSIWLSPVILCLFCMLFLWP) threads the bilayer.

The protein belongs to the paxM FAD-dependent monooxygenase family. Requires FAD as cofactor.

Its subcellular location is the membrane. It carries out the reaction [(1'E)-3'-hydroxy-3',7'-dimethylocta-1',6'-dien-1'-yl]-quinolinone B + NADPH + O2 + H(+) = [(1'E)-5'-(3',3'-dimethyloxiran-2'-yl)-3'-hydroxy-3'-methylpent-1'-en-1'-yl]-quinolinone B + NADP(+) + H2O. It participates in secondary metabolite biosynthesis. Its pathway is alkaloid biosynthesis. It functions in the pathway mycotoxin biosynthesis. In terms of biological role, FAD-dependent monooxygenase; part of the gene cluster that mediates the biosynthesis of penigequinolones, potent insecticidal alkaloids that contain a highly modified 10-carbon prenyl group. The first stage is catalyzed by the nonribosomal peptide synthetase penN that condenses anthranilic acid and O-methyl-L-tyrosine to produce 4'-methoxycyclopeptin. 4'-methoxycyclopeptin is then converted to 4'-methoxydehydrocyclopeptin by the ketoglutarate-dependent dioxygenase penM through dehydrogenation to form a double bond between C-alpha and C-beta of the O-methyltyrosine side chain. PenM also converts its first product methoxydehydrocyclopeptin to 4'-methoxycyclopenin. The following conversion of 4'methoxycyclopenin into 4'-methoxyviridicatin is catalyzed by the cyclopenase penL. 4'-methoxyviridicatin is the precursor of quinolone natural products, and is further converted to quinolinone B. The prenyltransferase penI then catalyzes the canonical Friedel-Crafts alkylation of quinolinone B with dimethylallyl cation to yield dimethylallyl quinolone, which is subjected to FAD-dependent dehydrogenation by the FAD-linked oxidoreductase penH to yield conjugated aryl diene. The delta(3') double bond then serves as the site of the second alkylation with DMAPP catalyzed by the prenyltransferase penG to yield a carbenium ion intermediate, which can be attacked by H(2)O to yield a styrenyl quinolone containing a C3'-hydroxyprenyl chain, or undergo cyclization to yield yaequinolones J1 and J2. The conversion of the styrenyl quinolone into the tetrahydrofuran-containing yaequinolone C is performed by the FAD-dependent monooxygenase penE and involves epoxidation of the terminal C7'-C8' olefin, followed by epoxide ring opening initiated by the C3' hydroxyl group. The predicted cysteine hydrolase penJ acts as an epoxide hydrolase that enhances the rate of the 5-exo-tet cyclization step, increasing the yield of yaequinolone C. PenF catalyzes the cationic rearrangement of the epoxide formed by penE (before ring opening to produce yaequinolone C) into yaequinolone D. Finally, the short-chain dehydrogenase/reductase (SDR)-like reductase penD, catalyzes both the dehydration of yaequinolone D and the reduction of the resulting oxonium to yield penigequinolone. The polypeptide is FAD-dependent monooxygenase penE (Penicillium thymicola).